A 543-amino-acid chain; its full sequence is Chaperonin GroEL 1 (543 aa).

Residues 30-33 (TLGP), lysine 51, 87-91 (DGTTT), glycine 415, and aspartate 496 contribute to the ATP site.

The protein belongs to the chaperonin (HSP60) family. As to quaternary structure, forms a cylinder of 14 subunits composed of two heptameric rings stacked back-to-back. Interacts with the co-chaperonin GroES.

The protein resides in the cytoplasm. It carries out the reaction ATP + H2O + a folded polypeptide = ADP + phosphate + an unfolded polypeptide.. Functionally, together with its co-chaperonin GroES, plays an essential role in assisting protein folding. The GroEL-GroES system forms a nano-cage that allows encapsulation of the non-native substrate proteins and provides a physical environment optimized to promote and accelerate protein folding. This Mesorhizobium japonicum (strain LMG 29417 / CECT 9101 / MAFF 303099) (Mesorhizobium loti (strain MAFF 303099)) protein is Chaperonin GroEL 1.